Reading from the N-terminus, the 559-residue chain is Leucine-rich repeat protein soc-2 (559 aa).

Basic and acidic residues predominate over residues 1-17; the sequence is METSKEFEFRPAKETSR. Residues 1–55 form a disordered region; it reads METSKEFEFRPAKETSRSKSPGGIVGRLSNFARNKARHSLSEKGSNSVGGSGGAG. LRR repeat units lie at residues 74-95, 97-118, 120-142, 143-164, 166-187, 189-210, 212-233, 235-256, 258-279, 281-302, 305-326, 329-350, 353-374, 376-397, 399-420, 422-443, 445-466, 468-489, 491-513, and 515-536; these read QDQR…IKEL, QLTE…IGQL, NLKK…ASLE, SLET…IYKI, SLET…IGNL, KLKM…IGKL, SLVV…IGDC, SLTQ…IGKL, NLVR…LESC, QLEE…LLTM, KIHT…GPQQ, STVT…IFSK, RLTK…MGSW, SITE…IEKL, NLEI…IGNL, KLRE…IGFL, HLTK…IGNL, SLQD…IGHL, SLKS…LALC, and SLEI…ITAG.

It belongs to the SHOC2 family. In terms of assembly, interacts with let-60.

Acts as a Ras effector and participates in MAPK pathway activation. Probably acts as a scaffolding protein in a protein phosphatase complex that specifically dephosphorylates Raf kinase and stimulates Raf activity at specialized signaling complexes upon Ras activation. Required for vulval development. Involved in fluid homeostasis. Plays a role in nicotinic acetylcholine receptor (nAChR)-mediated sensitivity to nicotine. This chain is Leucine-rich repeat protein soc-2 (soc-2), found in Caenorhabditis elegans.